A 1012-amino-acid polypeptide reads, in one-letter code: Axonemal dynein light chain domain-containing protein 1 (1012 aa).

Positions 1–17 (MSLPKTPSTPLNSTSTS) are enriched in low complexity. Residues 1 to 34 (MSLPKTPSTPLNSTSTSESKKLKVSVAKEGTRGL) form a disordered region. Coiled-coil stretches lie at residues 317–402 (QRIL…IWSS), 447–486 (EDLA…IVKD), and 572–597 (SERQ…RING). Acidic residues predominate over residues 841–854 (PEIDESFKEDEEES). Disordered regions lie at residues 841 to 879 (PEID…TEKE) and 963 to 1012 (LEEL…KKGH). 2 stretches are compositionally biased toward basic and acidic residues: residues 855 to 879 (KEDR…TEKE) and 963 to 987 (LEEL…REVK). The span at 988 to 997 (EEEEQQEEEE) shows a compositional bias: acidic residues.

Highly expressed in testis. Highly expressed in the round and late spermatids.

The protein localises to the cytoplasm. Functionally, may be essential for spermiogenesis and male fertility probably by regulating the manchette dynamics, spermatid head shaping and sperm flagellum assembly. This is Axonemal dynein light chain domain-containing protein 1 from Homo sapiens (Human).